The following is a 21-amino-acid chain: Protein IroK (21 aa).

Functionally, possible increased expression of this protein (due to mutations upstream of the start codon) is proposed to be responsible for resistance to 3-hydroxypropionic acid (3-HP). The protein is Protein IroK (iroK) of Escherichia coli (strain K12).